A 91-amino-acid polypeptide reads, in one-letter code: Small ribosomal subunit protein bS20 (91 aa).

Basic and acidic residues predominate over residues 1–18 (MPLHKSAEKRLRQSERRN). The tract at residues 1-25 (MPLHKSAEKRLRQSERRNARNRARK) is disordered.

This sequence belongs to the bacterial ribosomal protein bS20 family.

Its function is as follows. Binds directly to 16S ribosomal RNA. The polypeptide is Small ribosomal subunit protein bS20 (Chlorobium luteolum (strain DSM 273 / BCRC 81028 / 2530) (Pelodictyon luteolum)).